Consider the following 217-residue polypeptide: D-methionine transport system permease protein MetI (217 aa).

The Periplasmic portion of the chain corresponds to 1-19 (MSEPMMWLLVRGVWETLAM). One can recognise an ABC transmembrane type-1 domain in the interval 13 to 204 (VWETLAMTFV…LLVILVYLIQ (192 aa)). Residues 20–40 (TFVSGFFGFVVGLPVGVLLYV) form a helical membrane-spanning segment. The Cytoplasmic segment spans residues 41-57 (TRPGQIIANAKLYRTVS). Residues 58 to 78 (AIVNIFRSIPFIILLVWMIPF) traverse the membrane as a helical segment. Residues 79 to 80 (TR) lie on the Periplasmic side of the membrane. The chain crosses the membrane as a helical span at residues 81 to 101 (VIVGTSIGLQAAIVPLTVGAA). Residues 102-151 (PFIARMVENALLEIPTGLIEASRAMGATPMQIVRKVLLPEALPGLVNAAT) are Cytoplasmic-facing. The chain crosses the membrane as a helical span at residues 152–172 (ITLITLVGYSAMGGAVGAGGL). The Periplasmic portion of the chain corresponds to 173-185 (GQIGYQYGYIGYN). The chain crosses the membrane as a helical span at residues 186–206 (ATVMNTVLVLLVILVYLIQFA). Residues 207 to 217 (GDRIVRAVTRK) lie on the Cytoplasmic side of the membrane.

Belongs to the binding-protein-dependent transport system permease family. CysTW subfamily.

The protein localises to the cell inner membrane. Part of the binding-protein-dependent transport system for D-methionine and the toxic methionine analog alpha-methyl-methionine. Probably responsible for the translocation of the substrate across the membrane. The protein is D-methionine transport system permease protein MetI (metI) of Escherichia coli O157:H7.